A 428-amino-acid polypeptide reads, in one-letter code: Protein ECERIFERUM 26 (428 aa).

Residues 1-36 (MGRSQEQGQGQGPVHSIRLSTVGATRPTETGTTHEP) are disordered. Over residues 21–36 (TVGATRPTETGTTHEP) the composition is skewed to low complexity.

This sequence belongs to the plant acyltransferase family. Highly expressed in leaves.

It localises to the cytoplasm. Its subcellular location is the cytosol. In terms of biological role, involved in biosynthesis of the epicuticular wax. Plays a role in very-long-chain fatty acid (VLCFA) biosynthesis and is required for C30 fatty acid elongation in leaf. Despite its classification as a BAHD acyltransferase based on sequence homology, CER26 does not seem to share the catalytic mechanism of the members of the BAHD family. This Arabidopsis thaliana (Mouse-ear cress) protein is Protein ECERIFERUM 26 (CER26).